Consider the following 154-residue polypeptide: D-aminoacyl-tRNA deacylase (154 aa).

A Gly-cisPro motif, important for rejection of L-amino acids motif is present at residues G142–P143.

Belongs to the DTD family. In terms of assembly, homodimer.

It localises to the cytoplasm. It carries out the reaction glycyl-tRNA(Ala) + H2O = tRNA(Ala) + glycine + H(+). The catalysed reaction is a D-aminoacyl-tRNA + H2O = a tRNA + a D-alpha-amino acid + H(+). In terms of biological role, an aminoacyl-tRNA editing enzyme that deacylates mischarged D-aminoacyl-tRNAs. Also deacylates mischarged glycyl-tRNA(Ala), protecting cells against glycine mischarging by AlaRS. Acts via tRNA-based rather than protein-based catalysis; rejects L-amino acids rather than detecting D-amino acids in the active site. By recycling D-aminoacyl-tRNA to D-amino acids and free tRNA molecules, this enzyme counteracts the toxicity associated with the formation of D-aminoacyl-tRNA entities in vivo and helps enforce protein L-homochirality. This chain is D-aminoacyl-tRNA deacylase, found in Acidovorax sp. (strain JS42).